A 232-amino-acid chain; its full sequence is MSACQSPIIVALDFPTREAALALADQLDPKLCRVKVGKELFTSCAAGIVEILRDKGFEVFLDLKFHDIPNTTAMAVKAAAEMGVWMVNVHCSGGLRMMAACRETLEAFNGPKPLLIGVTVLTSMEREDLAGIGLDIEPQEQVLRLAALAEKAGMDGLVCSAQEAPALKGAHPRLQLVTPGIRPAGSAQDDQRRILTPRQALDAGSDYLVIGRPISQAADPAKALAAIVAELG.

Substrate-binding positions include Asp13, Lys35, 62-71 (DLKFHDIPNT), Thr122, Arg182, Gln191, Gly211, and Arg212. The active-site Proton donor is Lys64.

The protein belongs to the OMP decarboxylase family. Type 1 subfamily. In terms of assembly, homodimer.

The catalysed reaction is orotidine 5'-phosphate + H(+) = UMP + CO2. Its pathway is pyrimidine metabolism; UMP biosynthesis via de novo pathway; UMP from orotate: step 2/2. Catalyzes the decarboxylation of orotidine 5'-monophosphate (OMP) to uridine 5'-monophosphate (UMP). In Pseudomonas paraeruginosa (strain DSM 24068 / PA7) (Pseudomonas aeruginosa (strain PA7)), this protein is Orotidine 5'-phosphate decarboxylase.